The primary structure comprises 585 residues: Glutamine--tRNA ligase (585 aa).

Residues 51–61 (PEPNGYLHIGH) carry the 'HIGH' region motif. ATP is bound by residues 52–54 (EPN) and 58–64 (HIGHAKS). Residues D84 and Y238 each contribute to the L-glutamine site. ATP is bound by residues T257 and 292–293 (RL). Residues 299–303 (ITSKR) carry the 'KMSKS' region motif.

This sequence belongs to the class-I aminoacyl-tRNA synthetase family. In terms of assembly, monomer.

The protein localises to the cytoplasm. The catalysed reaction is tRNA(Gln) + L-glutamine + ATP = L-glutaminyl-tRNA(Gln) + AMP + diphosphate. The polypeptide is Glutamine--tRNA ligase (Cupriavidus taiwanensis (strain DSM 17343 / BCRC 17206 / CCUG 44338 / CIP 107171 / LMG 19424 / R1) (Ralstonia taiwanensis (strain LMG 19424))).